Consider the following 503-residue polypeptide: Cytochrome P450 3A8 (503 aa).

Cys-442 is a binding site for heme.

The protein belongs to the cytochrome P450 family. Heme serves as cofactor.

It is found in the endoplasmic reticulum membrane. It localises to the microsome membrane. It catalyses the reaction an organic molecule + reduced [NADPH--hemoprotein reductase] + O2 = an alcohol + oxidized [NADPH--hemoprotein reductase] + H2O + H(+). In terms of biological role, catalyzes nifedipine and nilvadipine oxidations. This chain is Cytochrome P450 3A8 (CYP3A8), found in Macaca fascicularis (Crab-eating macaque).